Consider the following 332-residue polypeptide: Small ribosomal subunit biogenesis GTPase RsgA (332 aa).

The region spanning 103 to 259 is the CP-type G domain; the sequence is RQQLIAANLD…LIDTPGMREL (157 aa). Residues 148–151 and 201–209 contribute to the GTP site; these read TKVD and GSSGAGKST. The Zn(2+) site is built by Cys-281, Cys-286, His-288, and Cys-294.

The protein belongs to the TRAFAC class YlqF/YawG GTPase family. RsgA subfamily. In terms of assembly, monomer. Associates with 30S ribosomal subunit, binds 16S rRNA. Zn(2+) serves as cofactor.

It localises to the cytoplasm. Its function is as follows. One of several proteins that assist in the late maturation steps of the functional core of the 30S ribosomal subunit. Helps release RbfA from mature subunits. May play a role in the assembly of ribosomal proteins into the subunit. Circularly permuted GTPase that catalyzes slow GTP hydrolysis, GTPase activity is stimulated by the 30S ribosomal subunit. This Xylella fastidiosa (strain M12) protein is Small ribosomal subunit biogenesis GTPase RsgA.